Reading from the N-terminus, the 165-residue chain is Endoribonuclease YbeY (165 aa).

Residues H130, H134, and H140 each coordinate Zn(2+).

It belongs to the endoribonuclease YbeY family. Zn(2+) is required as a cofactor.

It is found in the cytoplasm. Single strand-specific metallo-endoribonuclease involved in late-stage 70S ribosome quality control and in maturation of the 3' terminus of the 16S rRNA. The polypeptide is Endoribonuclease YbeY (Streptococcus suis (strain 98HAH33)).